We begin with the raw amino-acid sequence, 269 residues long: 15-hydroxyprostaglandin dehydrogenase [NAD(+)] (269 aa).

Residues 12–20, 36–37, 63–65, and N91 contribute to the NAD(+) site; these read GAAQGIGKA, DW, and CDV. Residues S138 and Q148 each contribute to the substrate site. The active-site Proton acceptor is the Y151. NAD(+) contacts are provided by residues 151-155 and 186-188; these read YCASK and VDT.

The protein belongs to the short-chain dehydrogenases/reductases (SDR) family. Homodimer. As to expression, expressed in proximal convoluted tubules of the kidney, where it colocalizes with the prostaglandin transporter SLC22A22 (at protein level). Expressed in lung, intestine, stomach and liver.

The protein localises to the cytoplasm. It carries out the reaction prostaglandin E2 + NAD(+) = 15-oxoprostaglandin E2 + NADH + H(+). The catalysed reaction is (15S)-hydroxy-(5Z,8Z,11Z,13E)-eicosatetraenoate + NAD(+) = 15-oxo-(5Z,8Z,11Z,13E)-eicosatetraenoate + NADH + H(+). The enzyme catalyses (11R)-hydroxy-(5Z,8Z,12E,14Z)-eicosatetraenoate + NAD(+) = 11-oxo-(5Z,8Z,12E,14Z)-eicosatetraenoate + NADH + H(+). It catalyses the reaction lipoxin A4 + NAD(+) = 15-oxo-(5S,6R)-dihydroxy-(7E,9E,11Z,13E)-eicosatetraenoate + NADH + H(+). It carries out the reaction 15-oxo-(5S,6R)-dihydroxy-(7E,9E,11Z)-eicosatrienoate + NADH + H(+) = (5S,6R,15S)-trihydroxy-(7E,9E,11Z)-eicosatrienoate + NAD(+). The catalysed reaction is prostaglandin A1 + NAD(+) = 15-oxo-prostaglandin A1 + NADH + H(+). The enzyme catalyses prostaglandin E1 + NAD(+) = 15-oxoprostaglandin E1 + NADH + H(+). It catalyses the reaction 14-hydroxy-(4Z,7Z,10Z,12E,16Z,19Z)-docosahexaenoate + NAD(+) = 14-oxo-(4Z,7Z,10Z,12E,16Z,19Z)-docosahexaenoate + NADH + H(+). It carries out the reaction resolvin E1 + NAD(+) = 18-oxo-resolvin E1 + NADH + H(+). The catalysed reaction is resolvin D1 + NAD(+) = 8-oxoresolvin D1 + NADH + H(+). The enzyme catalyses resolvin D1 + NAD(+) = 17-oxoresolvin D1 + NADH + H(+). It catalyses the reaction resolvin D2 + NAD(+) = 7-oxoresolvin D2 + NADH + H(+). It carries out the reaction resolvin D2 + NAD(+) = 16-oxoresolvin D2 + NADH + H(+). In terms of biological role, catalyzes the NAD-dependent dehydrogenation (oxidation) of a broad array of hydroxylated polyunsaturated fatty acids (mainly eicosanoids and docosanoids, including prostaglandins, lipoxins and resolvins), yielding their corresponding keto (oxo) metabolites. Decreases the levels of the pro-proliferative prostaglandins such as prostaglandin E2 (whose activity is increased in cancer because of an increase in the expression of cyclooxygenase 2) and generates oxo-fatty acid products that can profoundly influence cell function by abrogating pro-inflammatory cytokine expression. Converts resolvins E1, D1 and D2 to their oxo products, which represents a mode of resolvin inactivation. Resolvin E1 plays important roles during the resolution phase of acute inflammation, while resolvins D1 and D2 have a unique role in obesity-induced adipose inflammation. This chain is 15-hydroxyprostaglandin dehydrogenase [NAD(+)] (Hpgd), found in Mus musculus (Mouse).